Consider the following 369-residue polypeptide: Cystathionine gamma-synthase (369 aa).

N6-(pyridoxal phosphate)lysine is present on Lys-200.

The protein belongs to the trans-sulfuration enzymes family. As to quaternary structure, homotetramer. Pyridoxal 5'-phosphate is required as a cofactor.

It is found in the cytoplasm. The enzyme catalyses O-succinyl-L-homoserine + L-cysteine = L,L-cystathionine + succinate + H(+). Functionally, catalyzes the formation of L-cystathionine from O-succinyl-L-homoserine (OSHS) and L-cysteine, via a gamma-replacement reaction. In the absence of thiol, catalyzes gamma-elimination to form 2-oxobutanoate, succinate and ammonia. This Haemophilus influenzae (strain ATCC 51907 / DSM 11121 / KW20 / Rd) protein is Cystathionine gamma-synthase (metB).